The primary structure comprises 285 residues: 4-diphosphocytidyl-2-C-methyl-D-erythritol kinase (285 aa).

K12 is an active-site residue. Residue 95–105 participates in ATP binding; that stretch reads PMGGGVGGGSS. D137 is an active-site residue.

This sequence belongs to the GHMP kinase family. IspE subfamily.

The catalysed reaction is 4-CDP-2-C-methyl-D-erythritol + ATP = 4-CDP-2-C-methyl-D-erythritol 2-phosphate + ADP + H(+). The protein operates within isoprenoid biosynthesis; isopentenyl diphosphate biosynthesis via DXP pathway; isopentenyl diphosphate from 1-deoxy-D-xylulose 5-phosphate: step 3/6. In terms of biological role, catalyzes the phosphorylation of the position 2 hydroxy group of 4-diphosphocytidyl-2C-methyl-D-erythritol. The protein is 4-diphosphocytidyl-2-C-methyl-D-erythritol kinase of Actinobacillus pleuropneumoniae serotype 7 (strain AP76).